The primary structure comprises 306 residues: uncharacterized protein (306 aa).

A coiled-coil region spans residues 277–306; that stretch reads TEIIQNYKIANELKKEKQQNKKKNSIELEE.

This is an uncharacterized protein from Saccharolobus islandicus (Sulfolobus islandicus).